The chain runs to 162 residues: Endoribonuclease YbeY (162 aa).

Positions 126, 130, and 136 each coordinate Zn(2+).

This sequence belongs to the endoribonuclease YbeY family. Zn(2+) serves as cofactor.

It is found in the cytoplasm. In terms of biological role, single strand-specific metallo-endoribonuclease involved in late-stage 70S ribosome quality control and in maturation of the 3' terminus of the 16S rRNA. This Fusobacterium nucleatum subsp. nucleatum (strain ATCC 25586 / DSM 15643 / BCRC 10681 / CIP 101130 / JCM 8532 / KCTC 2640 / LMG 13131 / VPI 4355) protein is Endoribonuclease YbeY.